The following is a 612-amino-acid chain: UvrABC system protein C (612 aa).

The region spanning 21-99 (KLPGVYQMYD…IKSQKPPFNI (79 aa)) is the GIY-YIG domain. Residues 209 to 244 (EVLQQELQVEMEQASQALDFERAVVVRDQITDLRQV) enclose the UVR domain.

Belongs to the UvrC family. Interacts with UvrB in an incision complex.

It is found in the cytoplasm. Its function is as follows. The UvrABC repair system catalyzes the recognition and processing of DNA lesions. UvrC both incises the 5' and 3' sides of the lesion. The N-terminal half is responsible for the 3' incision and the C-terminal half is responsible for the 5' incision. This chain is UvrABC system protein C, found in Saccharophagus degradans (strain 2-40 / ATCC 43961 / DSM 17024).